The sequence spans 571 residues: MNDPREILAVDPYNNITSDEEDEQAIARELEFMERKRQALVERLKRKQEFKKPQDPNFEAIEVPQSPTKNRVKVGSHNATQQGTKFEGSNINEVRLSQLQQQPKPPASTTTYFMEKFQNAKKNEDKQIAKFESMMNARVHTFSTDEKKYVPIITNELESFSNLWVKKRYIPEDDLKRALHEIKILRLGKLFAKIRPPKFQEPEYANWATVGLISHKSDIKFTSSEKPVKFFMFTITDFQHTLDVYIFGKKGVERYYNLRLGDVIAILNPEVLPWRPSGRGNFIKSFNLRISHDFKCILEIGSSRDLGWCPIVNKKTHKKCGSPINISLHKCCDYHREVQFRGTSAKRIELNGGYALGAPTKVDSQPSLYKAKGENGFNIIKGTRKRLSEEEERLKKSSHNFTNSNSAKAFFDEKFQNPDMLANLDNKRRKIIETKKSTALSRELGKIMRRRESSGLEDKSVGERQKMKRTTESALQTGLIQRLGFDPTHGKISQVLKSSVSGSEPKNNLLGKKKTVINDLLHYKKEKVILAPSKNEWFKKRSHREEVWQKHFGSKETKETSDGSASDLEII.

A Phosphothreonine modification is found at Thr17. Ser18 bears the Phosphoserine mark. The segment at 309–335 (CPIVNKKTHKKCGSPINISLHKCCDYH) is zinc finger-like. The short motif at 435–451 (KKSTALSRELGKIMRRR) is the Bipartite nuclear localization signal element. Sufficient for nuclear localization regions lie at residues 435–512 (KKST…LLGK) and 453–553 (SSGL…KHFG). A compositionally biased stretch (basic and acidic residues) spans 451 to 471 (RESSGLEDKSVGERQKMKRTT). Residues 451–473 (RESSGLEDKSVGERQKMKRTTES) form a disordered region. A phosphoserine mark is found at Ser453 and Ser454. The Bipartite nuclear localization signal signature appears at 512–527 (KKKTVINDLLHYKKEK). Basic and acidic residues predominate over residues 548 to 561 (WQKHFGSKETKETS). The tract at residues 548–571 (WQKHFGSKETKETSDGSASDLEII) is disordered.

The protein belongs to the MCM10 family. In terms of assembly, self-associates; assembles into large homomultimeric complexes of approximately 800 kDa. Associates with the MCM2-7 complex and the DNA polymerase alpha:primase complex. Interacts with ORC1, ORC2, MCM2, MCM3, CDC54/MCM4, MCM6, CDC47/MCM7, RFA2, CDC45, POL1, PRI2, POL12, SIR2 and SIR3. The diubiquitinated form interacts with POL30/PCNA C-terminus. In terms of processing, diubiquitinated in a cell cycle-regulated manner. Ubiquitination first appears in late G(1) and persists throughout S phase.

It is found in the nucleus. Functionally, required for DNA synthesis. Required for entry into or completion of S phase. Involved in DNA replication and seems to participate in the activation of the pre-replication complex (pre-RC) and in transcription elongation. May play a role as a key coordinator in assembling the replication fork. Proposed to function at replication origins following the binding of the MCM2-7 complex prior to the recruitment of CDC45. Probably is required to stimulate phosphorylation of the MCM2-7 complex by the CDC7-DBF4 kinase complex. May recruit the DNA polymerase alpha:primase complex to replication origins and is required to maintain it on chromatin independently of CDC45. May also play a role in transcriptional silencing. The sequence is that of Minichromosome maintenance protein 10 (MCM10) from Saccharomyces cerevisiae (strain ATCC 204508 / S288c) (Baker's yeast).